The following is a 1128-amino-acid chain: Nck-associated protein 1 (1128 aa).

Serine 2 bears the N-acetylserine mark. The segment at 640 to 665 is disordered; the sequence is AVNKKSKKQTGKKGEPEREKPGVESM. The segment covering 651–665 has biased composition (basic and acidic residues); sequence KKGEPEREKPGVESM. A helical transmembrane segment spans residues 995-1015; sequence IACLLMVFVAVSLPTLASNVM.

This sequence belongs to the HEM-1/HEM-2 family. In terms of assembly, component of the WAVE1 complex composed of ABI2, CYFIP1 or CYFIP2, BRK1, NCKAP1 and WASF1/WAVE1. Within the complex, a heterodimer containing NCKAP1 and CYFIP1 interacts with a heterotrimer formed by WAVE1, ABI2 and BRK1. Component of the WAVE2 complex composed of ABI1, CYFIP1/SRA1, NCKAP1/NAP1 and WASF2/WAVE2. CYFIP2 binds to activated RAC1 which causes the complex to dissociate, releasing activated WASF1. The complex can also be activated by NCK1. Associates preferentially with the first SH3 domain of NCK. Interacts with NYAP1, NYAP2 and MYO16. Interacts with TMEM132D. Preferentially expressed in brain, heart, liver and testis.

It localises to the cell membrane. The protein localises to the cell projection. It is found in the lamellipodium membrane. Its function is as follows. Part of the WAVE complex that regulates lamellipodia formation. The WAVE complex regulates actin filament reorganization via its interaction with the Arp2/3 complex. Actin remodeling activity is regulated by RAC1. As component of the WAVE1 complex, required for BDNF-NTRK2 endocytic trafficking and signaling from early endosomes. This Rattus norvegicus (Rat) protein is Nck-associated protein 1 (Nckap1).